The primary structure comprises 266 residues: Enterotoxin type C-3 (266 aa).

The first 27 residues, 1–27 (MYKRLFISRVILIFALILVISTPNVLA), serve as a signal peptide directing secretion. Zn(2+) contacts are provided by Asp36 and Asp110. Cys120 and Cys137 are oxidised to a cystine. Positions 145 and 149 each coordinate Zn(2+).

The protein belongs to the staphylococcal/streptococcal toxin family. As to quaternary structure, interacts with MHC class II molecules composed of alpha/HLA-DRA and beta/HLA-DRB1 chains. Interacts with host T-cell receptor/TCR beta variable chain TRBV8-2.

Its subcellular location is the secreted. In terms of biological role, staphylococcal enterotoxin that activates the host immune system by binding as unprocessed molecules to major histocompatibility (MHC) complex class II and T-cell receptor (TCR) molecules. In turn, this ternary complex activates a large number of T-lymphocytes initiating a systemic release of pro-inflammatory cytokines. Also causes the intoxication staphylococcal food poisoning syndrome. In Staphylococcus aureus, this protein is Enterotoxin type C-3 (entC3).